We begin with the raw amino-acid sequence, 277 residues long: Putative phosphoenolpyruvate synthase regulatory protein (277 aa).

Residue 156–163 coordinates ADP; the sequence is GVSRAGKT.

The protein belongs to the pyruvate, phosphate/water dikinase regulatory protein family. PSRP subfamily.

It catalyses the reaction [pyruvate, water dikinase] + ADP = [pyruvate, water dikinase]-phosphate + AMP + H(+). The enzyme catalyses [pyruvate, water dikinase]-phosphate + phosphate + H(+) = [pyruvate, water dikinase] + diphosphate. Bifunctional serine/threonine kinase and phosphorylase involved in the regulation of the phosphoenolpyruvate synthase (PEPS) by catalyzing its phosphorylation/dephosphorylation. This is Putative phosphoenolpyruvate synthase regulatory protein from Deinococcus radiodurans (strain ATCC 13939 / DSM 20539 / JCM 16871 / CCUG 27074 / LMG 4051 / NBRC 15346 / NCIMB 9279 / VKM B-1422 / R1).